A 425-amino-acid chain; its full sequence is GTPase Obg (425 aa).

Residues 1–158 (MFIDKARIFV…RWITLELKMI (158 aa)) enclose the Obg domain. Residues 159–330 (ADVGLLGFPN…VIAYVSKMLK (172 aa)) enclose the OBG-type G domain. GTP contacts are provided by residues 165–172 (GFPNVGKS), 190–194 (FTTLT), 212–215 (DIPG), 282–285 (NKFD), and 311–313 (SAA). Residues Ser172 and Thr192 each contribute to the Mg(2+) site. The 82-residue stretch at 344-425 (YRPELDIGTE…IYELEFEFYN (82 aa)) folds into the OCT domain.

The protein belongs to the TRAFAC class OBG-HflX-like GTPase superfamily. OBG GTPase family. In terms of assembly, monomer. Mg(2+) is required as a cofactor.

The protein localises to the cytoplasm. In terms of biological role, an essential GTPase which binds GTP, GDP and possibly (p)ppGpp with moderate affinity, with high nucleotide exchange rates and a fairly low GTP hydrolysis rate. Plays a role in control of the cell cycle, stress response, ribosome biogenesis and in those bacteria that undergo differentiation, in morphogenesis control. The polypeptide is GTPase Obg (Clostridioides difficile (strain 630) (Peptoclostridium difficile)).